A 778-amino-acid polypeptide reads, in one-letter code: uncharacterized protein (778 aa).

Polar residues-rich tracts occupy residues 1–11, 18–34, and 41–51; these read MPISSPGTRCS, TLQQ…QSLG, and GSITENYVQDS. Residues 1-60 form a disordered region; that stretch reads MPISSPGTRCSSDLKDPTLQQYSAESVSTEQSLGTFEESKGSITENYVQDSSVDEHDDGN. 2 consecutive transmembrane segments (helical) span residues 356–381 and 401–423; these read YILM…APII and GFLA…GAHI.

Belongs to the TMCO4 family.

Its subcellular location is the golgi apparatus membrane. This is an uncharacterized protein from Schizosaccharomyces pombe (strain 972 / ATCC 24843) (Fission yeast).